Consider the following 1024-residue polypeptide: MPKRTDLQTILILGSGPIQIGQAAEFDYSGTQALKALKNEGYRVILVNSNPATIMTDPELADATYLEPLTPEFVEKIIEKEKPDAILPTLGGQTALNLAMELHERGSLEKYGVELIGAGVEAIKKGEDRELFQAAMKKIGVETARGKMVHSMEEAVEYQKEIGLPIVIRPSFTLGGTGGGIAHTYEEFLAITEGGLRDSPVTSVLLEESILGWKEYELEVMRDTADTVIIITSIENFDPMGVHTGDSITVAPAQTLSDVEYQRLRDQSLAIIREIGVATGGSNIQFAVNPDNGRVIVIEMNPRVSRSSALASKATGFPIAKIAALLAVGYHLDELPNDITRVTPASFEPSIDYVVTKIPRFAFEKFPGTPDGLGTQMRSVGEVMAIGRTFKESLQKALRSTEGDIRGVYAEMDEAGLRALLYPNPRRIEAVIELLRRGESVESLFDATKIDRWFLSQLKEIMDAEKEILDLGPIAEWKYELWREVKRLGFSDARIGEIVGLSELEVRDLRKKAKATPVYKTVDTCAAEFEAHTPYHYSTYEWEDEVAPTDKPKVVILGSGPNRIGQGVEFDYATVHAVWALQEAGYETIMVNSNPETVSTDYDTADRLYFEPLTFEDVMNIVEHEKPVGVIVQLGGQTPLKLAKKLADAGAPIIGTSPETIHEAEDRASFNALCERLGLPQPRGKVAQTPAQARELAAELGFPLMARPSYVLGGRAMRTVRSMDELTTYLDEVYAAVEGQPSILLDQFLEGALELDVDTLCDGERAVVAGIMEHVEAAGVHSGDSACILPPVTLDAGVLERVKADTERLALELGVRGLMNVQWAVKDGTAYILEANPRASRTVPFVSKAVNHPLAKSAARIAAGQTLEQIGLLETPTPRMYSVKEVHLPFLKFKDVLPVLGPEMKSTGESMGIDSDPYLAFYRAQLGAKNYLPLEGTALLIGDGLDEVAGTLEGAGLKVIREQDGDELPDLLIDVTGSPLLRTALERGVPIVSTKEGAEWTARAVAEAKKAGMLGVRSLQEWVK.

Residues 1-402 (MPKRTDLQTI…SLQKALRSTE (402 aa)) are carboxyphosphate synthetic domain. ATP-binding residues include arginine 129, arginine 169, glycine 175, glycine 176, glutamate 208, isoleucine 210, glutamate 215, glycine 241, valine 242, histidine 243, glutamine 285, and glutamate 299. The ATP-grasp 1 domain maps to 133–328 (QAAMKKIGVE…IAKIAALLAV (196 aa)). Glutamine 285, glutamate 299, and asparagine 301 together coordinate Mg(2+). Residues glutamine 285, glutamate 299, and asparagine 301 each contribute to the Mn(2+) site. Residues 403-546 (GDIRGVYAEM…YSTYEWEDEV (144 aa)) are oligomerization domain. Positions 547–929 (APTDKPKVVI…AFYRAQLGAK (383 aa)) are carbamoyl phosphate synthetic domain. The region spanning 671-863 (NALCERLGLP…LAKSAARIAA (193 aa)) is the ATP-grasp 2 domain. ATP is bound by residues arginine 707, glutamine 747, leucine 749, glutamate 754, glycine 779, valine 780, histidine 781, serine 782, glutamine 822, and glutamate 834. Residues glutamine 822, glutamate 834, and asparagine 836 each coordinate Mg(2+). Mn(2+) contacts are provided by glutamine 822, glutamate 834, and asparagine 836. The region spanning 930–1024 (NYLPLEGTAL…GVRSLQEWVK (95 aa)) is the MGS-like domain. The interval 930–1024 (NYLPLEGTAL…GVRSLQEWVK (95 aa)) is allosteric domain.

The protein belongs to the CarB family. Composed of two chains; the small (or glutamine) chain promotes the hydrolysis of glutamine to ammonia, which is used by the large (or ammonia) chain to synthesize carbamoyl phosphate. Tetramer of heterodimers (alpha,beta)4. Mg(2+) is required as a cofactor. It depends on Mn(2+) as a cofactor.

The catalysed reaction is hydrogencarbonate + L-glutamine + 2 ATP + H2O = carbamoyl phosphate + L-glutamate + 2 ADP + phosphate + 2 H(+). It carries out the reaction hydrogencarbonate + NH4(+) + 2 ATP = carbamoyl phosphate + 2 ADP + phosphate + 2 H(+). The protein operates within amino-acid biosynthesis; L-arginine biosynthesis; carbamoyl phosphate from bicarbonate: step 1/1. It participates in pyrimidine metabolism; UMP biosynthesis via de novo pathway; (S)-dihydroorotate from bicarbonate: step 1/3. Large subunit of the glutamine-dependent carbamoyl phosphate synthetase (CPSase). CPSase catalyzes the formation of carbamoyl phosphate from the ammonia moiety of glutamine, carbonate, and phosphate donated by ATP, constituting the first step of 2 biosynthetic pathways, one leading to arginine and/or urea and the other to pyrimidine nucleotides. The large subunit (synthetase) binds the substrates ammonia (free or transferred from glutamine from the small subunit), hydrogencarbonate and ATP and carries out an ATP-coupled ligase reaction, activating hydrogencarbonate by forming carboxy phosphate which reacts with ammonia to form carbamoyl phosphate. The sequence is that of Carbamoyl phosphate synthase large chain from Deinococcus radiodurans (strain ATCC 13939 / DSM 20539 / JCM 16871 / CCUG 27074 / LMG 4051 / NBRC 15346 / NCIMB 9279 / VKM B-1422 / R1).